The following is a 929-amino-acid chain: ATP-dependent RNA helicase DDX42 (929 aa).

An N6-acetyllysine modification is found at K5. R12 is modified (omega-N-methylarginine). 2 disordered regions span residues 25-119 and 182-203; these read KKEE…LEAF and EYDS…LPPI. Positions 35 to 52 are enriched in low complexity; sequence SHSAFGAASSSSGFGKSA. Phosphoserine is present on S58. The span at 70–84 shows a compositional bias: acidic residues; it reads DEENAYFEDEEEDSS. A phosphoserine mark is found at S96, S104, S109, and S111. Residues 116–157 adopt a coiled-coil conformation; that stretch reads LEAFMAEVEDQAARDMKRLEEKDKERKNVKGIRDDIEEEDDQ. Phosphoserine is present on S185. Residues 253 to 281 carry the Q motif motif; the sequence is SSFAHFGFDEQLMHQIRKSEYTQPTPIQC. The region spanning 284 to 459 is the Helicase ATP-binding domain; that stretch reads VPVALSGRDM…RDILIDPIRV (176 aa). 297-304 is a binding site for ATP; that stretch reads AKTGSGKT. Residues 407–410 carry the DEAD box motif; the sequence is DEAD. One can recognise a Helicase C-terminal domain in the interval 487 to 632; the sequence is WLTRRLVEFT…HVSKELLDLA (146 aa). Disordered stretches follow at residues 662 to 682 and 723 to 929; these read ERPG…VMSN and GTSS…RWDS. Positions 723 to 737 are enriched in low complexity; that stretch reads GTSSAGASGWTSAGS. Polar residues-rich tracts occupy residues 738–777 and 787–798; these read LNSV…SSAP and GVNNTASGNNSR. The segment at 739-828 is necessary for interaction with TP53BP2; that stretch reads NSVPTNSAQQ…RHSHGDGGNR (90 aa). Positions 821 to 911 are enriched in basic and acidic residues; that stretch reads SHGDGGNRHG…KVDSKTDKTP (91 aa). K894 is covalently cross-linked (Glycyl lysine isopeptide (Lys-Gly) (interchain with G-Cter in SUMO2)).

Belongs to the DEAD box helicase family. DDX42 subfamily. In terms of assembly, transient component of the SF3B subcomplex of the 17S U2 SnRNP complex. Interacts (via the C-terminus) with TP53BP2; the interaction is not inhibitied by TP53BP2 ubiquitination and is independent of p53/TP53.

The protein resides in the cytoplasm. The protein localises to the nucleus. It catalyses the reaction ATP + H2O = ADP + phosphate + H(+). Its function is as follows. ATP-dependent RNA helicase that binds to partially double-stranded RNAs (dsRNAs) in order to unwind RNA secondary structures. Unwinding is promoted in the presence of single-strand binding proteins. Also mediates RNA duplex formation thereby displacing the single-strand RNA binding protein. ATP and ADP modulate its activity: ATP binding and hydrolysis by DDX42 triggers RNA strand separation, whereas the ADP-bound form of the protein triggers annealing of complementary RNA strands. Required for assembly of the 17S U2 SnRNP complex of the spliceosome, a large ribonucleoprotein complex that removes introns from transcribed pre-mRNAs: DDX42 associates transiently with the SF3B subcomplex of the 17S U2 SnRNP complex and is released after fulfilling its role in the assembly of 17S U2 SnRNP. Involved in the survival of cells by interacting with TP53BP2 and thereby counteracting the apoptosis-stimulating activity of TP53BP2. Relocalizes TP53BP2 to the cytoplasm. The polypeptide is ATP-dependent RNA helicase DDX42 (Ddx42) (Mus musculus (Mouse)).